A 475-amino-acid chain; its full sequence is Ribulose bisphosphate carboxylase large chain (475 aa).

At Lys14 the chain carries N6,N6,N6-trimethyllysine. Residues Asn123 and Thr173 each coordinate substrate. Catalysis depends on Lys175, which acts as the Proton acceptor. Lys177 provides a ligand contact to substrate. Positions 201, 203, and 204 each coordinate Mg(2+). Lys201 bears the N6-carboxylysine mark. His294 acts as the Proton acceptor in catalysis. Residues Arg295, His327, and Ser379 each contribute to the substrate site.

The protein belongs to the RuBisCO large chain family. Type I subfamily. In terms of assembly, heterohexadecamer of 8 large chains and 8 small chains; disulfide-linked. The disulfide link is formed within the large subunit homodimers. The cofactor is Mg(2+). The disulfide bond which can form in the large chain dimeric partners within the hexadecamer appears to be associated with oxidative stress and protein turnover.

The protein localises to the plastid. It catalyses the reaction 2 (2R)-3-phosphoglycerate + 2 H(+) = D-ribulose 1,5-bisphosphate + CO2 + H2O. It carries out the reaction D-ribulose 1,5-bisphosphate + O2 = 2-phosphoglycolate + (2R)-3-phosphoglycerate + 2 H(+). In terms of biological role, ruBisCO catalyzes two reactions: the carboxylation of D-ribulose 1,5-bisphosphate, the primary event in carbon dioxide fixation, as well as the oxidative fragmentation of the pentose substrate in the photorespiration process. Both reactions occur simultaneously and in competition at the same active site. This chain is Ribulose bisphosphate carboxylase large chain (rbcL), found in Euglena longa (Euglenophycean alga).